Consider the following 301-residue polypeptide: Nucleotide-binding protein ELI_02120 (301 aa).

Residue 12 to 19 coordinates ATP; that stretch reads GMSGAGKS. 62 to 65 contributes to the GTP binding site; it reads DSRT.

The protein belongs to the RapZ-like family.

In terms of biological role, displays ATPase and GTPase activities. The sequence is that of Nucleotide-binding protein ELI_02120 from Erythrobacter litoralis (strain HTCC2594).